Consider the following 169-residue polypeptide: Ribosomal RNA large subunit methyltransferase H (169 aa).

S-adenosyl-L-methionine contacts are provided by residues Leu85, Gly117, and 136 to 141 (LGELTW).

The protein belongs to the RNA methyltransferase RlmH family. As to quaternary structure, homodimer.

It is found in the cytoplasm. The catalysed reaction is pseudouridine(1915) in 23S rRNA + S-adenosyl-L-methionine = N(3)-methylpseudouridine(1915) in 23S rRNA + S-adenosyl-L-homocysteine + H(+). Its function is as follows. Specifically methylates the pseudouridine at position 1915 (m3Psi1915) in 23S rRNA. In Brucella ovis (strain ATCC 25840 / 63/290 / NCTC 10512), this protein is Ribosomal RNA large subunit methyltransferase H.